Consider the following 184-residue polypeptide: Mediator of RNA polymerase II transcription subunit 28 (184 aa).

Residues leucine 77 to serine 105 adopt a coiled-coil conformation.

Belongs to the Mediator complex subunit 28 family. Component of the Mediator complex.

It is found in the nucleus. In terms of biological role, component of the Mediator complex, a coactivator involved in the regulated transcription of nearly all RNA polymerase II-dependent genes. Mediator functions as a bridge to convey information from gene-specific regulatory proteins to the basal RNA polymerase II transcription machinery. Mediator is recruited to promoters by direct interactions with regulatory proteins and serves as a scaffold for the assembly of a functional preinitiation complex with RNA polymerase II and the general transcription factors. This Aedes aegypti (Yellowfever mosquito) protein is Mediator of RNA polymerase II transcription subunit 28 (MED28).